The chain runs to 88 residues: Small ribosomal subunit protein bS20 (88 aa).

A compositionally biased stretch (basic and acidic residues) spans 1–23 (MPNTKSAEKALRVADANRQENRR). The disordered stretch occupies residues 1-29 (MPNTKSAEKALRVADANRQENRRAKSQVK).

This sequence belongs to the bacterial ribosomal protein bS20 family.

In terms of biological role, binds directly to 16S ribosomal RNA. The protein is Small ribosomal subunit protein bS20 of Dehalococcoides mccartyi (strain ATCC BAA-2100 / JCM 16839 / KCTC 5957 / BAV1).